The primary structure comprises 55 residues: UPF0391 membrane protein Meso_3110 (55 aa).

2 helical membrane passes run 4–24 and 30–50; these read WALV…GGIA and IAQI…LFGL.

This sequence belongs to the UPF0391 family.

The protein resides in the cell membrane. The sequence is that of UPF0391 membrane protein Meso_3110 from Chelativorans sp. (strain BNC1).